Consider the following 285-residue polypeptide: MKYIGAHVSAAGGLANAAIRAAEIDATAFALFTKNQRQWRAAPLTTQTIDEFKAACEKYHYTSAQILPHDSYLINLGHPVAEALEKSRDAFIDEMQRCEQLGLSLLNFHPGSHLMQISEEDCLARIAESINIALDKTQGVTAVIENTAGQGSNLGFKFEHLAAIIDGVEDKSRVGVCIDTCHAFAAGYDLRTPAECEKTFADFARIVGFKYLHGMHLNDAKSTFGSRVDRHHSLGEGNIGHDAFRWIMQDDRFDGIPLILETINPDIWAEEIAWLKAQQTEKAVA.

Zn(2+)-binding residues include histidine 69, histidine 109, glutamate 145, aspartate 179, histidine 182, histidine 216, aspartate 229, histidine 231, and glutamate 261.

It belongs to the AP endonuclease 2 family. Zn(2+) serves as cofactor.

It carries out the reaction Endonucleolytic cleavage to 5'-phosphooligonucleotide end-products.. Its function is as follows. Endonuclease IV plays a role in DNA repair. It cleaves phosphodiester bonds at apurinic or apyrimidinic (AP) sites, generating a 3'-hydroxyl group and a 5'-terminal sugar phosphate. This Escherichia coli O1:K1 / APEC protein is Probable endonuclease 4.